Consider the following 588-residue polypeptide: Probable G-protein coupled receptor 162 (588 aa).

Residues 1-17 lie on the Extracellular side of the membrane; that stretch reads MARGGAGAEEASLRSNA. A helical transmembrane segment spans residues 18-38; sequence LSWLACGLLALLANAWIILSI. Topologically, residues 39 to 49 are cytoplasmic; that stretch reads SAKQQKHKPLE. The chain crosses the membrane as a helical span at residues 50-70; the sequence is LLLCFLAGTHILMAAVPLTTF. Over 71 to 91 the chain is Extracellular; that stretch reads AVVQLRRQASSDYDWNESICK. Residue Asn-86 is glycosylated (N-linked (GlcNAc...) asparagine). The chain crosses the membrane as a helical span at residues 92-112; sequence VFVSTYYTLALATCFTVASLS. Residues 113-133 lie on the Cytoplasmic side of the membrane; the sequence is YHRMWMVRWPVNYRLSNAKKQ. The helical transmembrane segment at 134–154 threads the bilayer; sequence ALHAVMGIWMVSFILSTLPSI. Over 155-174 the chain is Extracellular; that stretch reads GWHNNGERYYARGCQFIVSK. Residues 175 to 195 traverse the membrane as a helical segment; sequence IGLGFGVCFSLLLLGGIVMGL. The Cytoplasmic segment spans residues 196–275; that stretch reads VCVAITFYQT…SLQVTNLVSA (80 aa). A helical transmembrane segment spans residues 276–296; that stretch reads IVFLYDSLTGVPILVVSFFSL. The Extracellular segment spans residues 297 to 303; it reads KSDSAPP. The helical transmembrane segment at 304–324 threads the bilayer; that stretch reads WMVLAVLWCSMAQTLLLPSFI. At 325–588 the chain is on the cytoplasmic side; it reads WSCERYRADV…GNPIFPQLTL (264 aa). Phosphoserine is present on residues Ser-413 and Ser-435. 2 disordered regions span residues 445–474 and 511–550; these read QSRA…AEGG and ETPL…AVGL. Residues 530 to 546 are compositionally biased toward low complexity; sequence PLGLSPRRLSLGSPESR.

This sequence belongs to the G-protein coupled receptor 1 family.

The protein localises to the cell membrane. Orphan receptor. In Homo sapiens (Human), this protein is Probable G-protein coupled receptor 162 (GPR162).